The chain runs to 306 residues: Uracil phosphoribosyltransferase homolog (306 aa).

Disordered stretches follow at residues 1 to 28 and 58 to 87; these read MATE…NPEP and SSVP…NYDA. Polar residues-rich tracts occupy residues 13–28 and 70–79; these read CHNQ…NPEP and GGATFNSENN. GTP contacts are provided by residues Arg130, Arg139, and 173–176; that span reads EKGN. Arg183 contributes to the 5-phospho-alpha-D-ribose 1-diphosphate binding site. 2 residues coordinate GTP: Arg200 and Arg229. Residue 235–243 coordinates 5-phospho-alpha-D-ribose 1-diphosphate; sequence YPILSTGNT. 296–298 is a binding site for uracil; the sequence is THF.

It belongs to the UPRTase family.

The protein localises to the cytoplasm. The protein resides in the nucleus. The sequence is that of Uracil phosphoribosyltransferase homolog (UPRT) from Bos taurus (Bovine).